The chain runs to 568 residues: Protein yellow (568 aa).

Positions 1-28 (MHAQDKGGILPALSLLLIAVAMVSPSQA) are cleaved as a signal peptide. Residues Asn-151 and Asn-222 are each glycosylated (N-linked (GlcNAc...) asparagine).

Belongs to the major royal jelly protein family.

It is found in the secreted. Functionally, controls the pigmentation pattern of the adult cuticle and larval mouth parts. This Drosophila madeirensis (Fruit fly) protein is Protein yellow (y).